The sequence spans 216 residues: MDAKQRIARRVAQELRDGDIVNLGIGLPTMVANYLPEGIHITLQSENGFLGLGPVTTAHPDLVNAGGQPCGVLPGAAMFDSAMSFALIRGGHIDACVLGGLQVDEEANLANWVVPGKMVPGMGGAMDLVTGSRKVIIAMEHCAKDGSAKILRRCTMPLTAQHAVHMLVTELAVFRFIDGKMWLTEIADGCDLATVRAKTEARFEVAADLNTQRGDL.

Glu-46 is a catalytic residue.

This sequence belongs to the 3-oxoacid CoA-transferase subunit B family. As to quaternary structure, heterotetramer composed of two alpha subunits (AtoD) and two beta subunits (AtoA).

It is found in the cytoplasm. The catalysed reaction is an acyl-CoA + acetate = a carboxylate + acetyl-CoA. The enzyme catalyses acetoacetate + acetyl-CoA = acetoacetyl-CoA + acetate. It carries out the reaction butanoate + acetyl-CoA = butanoyl-CoA + acetate. It catalyses the reaction acetoacetate + butanoyl-CoA = acetoacetyl-CoA + butanoate. Its pathway is lipid metabolism; short-chain fatty acid metabolism. With respect to regulation, inhibited by p-chloromercuribenzoate. In terms of biological role, coenzyme A transferase which is involved in short-chain fatty acid degradation and catalyzes the activation of short-chain fatty acids to their respective CoA thiolesters. During acetoacetate degradation, catalyzes the transfer of CoA from acetyl-CoA to acetoacetate by a mechanism involving a covalent enzyme-CoA compound as a reaction intermediate. Utilizes a variety of short chain acyl-CoA and carboxylic acid substrates but exhibits maximal activity with normal and 3-keto substrates. The protein is Acetate CoA-transferase subunit beta of Escherichia coli (strain K12).